The sequence spans 317 residues: Acetyl-coenzyme A carboxylase carboxyl transferase subunit alpha (317 aa).

The region spanning 40–293 (LEKRSADALK…GDIIAASLRS (254 aa)) is the CoA carboxyltransferase C-terminal domain.

This sequence belongs to the AccA family. In terms of assembly, acetyl-CoA carboxylase is a heterohexamer composed of biotin carboxyl carrier protein (AccB), biotin carboxylase (AccC) and two subunits each of ACCase subunit alpha (AccA) and ACCase subunit beta (AccD).

The protein localises to the cytoplasm. It catalyses the reaction N(6)-carboxybiotinyl-L-lysyl-[protein] + acetyl-CoA = N(6)-biotinyl-L-lysyl-[protein] + malonyl-CoA. The protein operates within lipid metabolism; malonyl-CoA biosynthesis; malonyl-CoA from acetyl-CoA: step 1/1. Functionally, component of the acetyl coenzyme A carboxylase (ACC) complex. First, biotin carboxylase catalyzes the carboxylation of biotin on its carrier protein (BCCP) and then the CO(2) group is transferred by the carboxyltransferase to acetyl-CoA to form malonyl-CoA. The chain is Acetyl-coenzyme A carboxylase carboxyl transferase subunit alpha from Brucella abortus (strain S19).